The following is a 376-amino-acid chain: N-acetyldiaminopimelate deacetylase (376 aa).

Asp-69 is an active-site residue. The active-site Proton acceptor is the Glu-128.

It belongs to the peptidase M20A family. N-acetyldiaminopimelate deacetylase subfamily.

It carries out the reaction N-acetyl-(2S,6S)-2,6-diaminopimelate + H2O = (2S,6S)-2,6-diaminopimelate + acetate. It functions in the pathway amino-acid biosynthesis; L-lysine biosynthesis via DAP pathway; LL-2,6-diaminopimelate from (S)-tetrahydrodipicolinate (acetylase route): step 3/3. Functionally, catalyzes the conversion of N-acetyl-diaminopimelate to diaminopimelate and acetate. The protein is N-acetyldiaminopimelate deacetylase of Bacillus anthracis (strain A0248).